The following is a 564-amino-acid chain: Urease subunit alpha (564 aa).

Positions 126-564 (GGIDTHIHFI…LPMAQRYFLF (439 aa)) constitute a Urease domain. Positions 131, 133, and 214 each coordinate Ni(2+). Lysine 214 bears the N6-carboxylysine mark. Residue histidine 216 participates in substrate binding. Positions 243 and 269 each coordinate Ni(2+). Catalysis depends on histidine 317, which acts as the Proton donor. Ni(2+) is bound at residue aspartate 357.

The protein belongs to the metallo-dependent hydrolases superfamily. Urease alpha subunit family. As to quaternary structure, heterotrimer of UreA (gamma), UreB (beta) and UreC (alpha) subunits. Three heterotrimers associate to form the active enzyme. It depends on Ni cation as a cofactor. Carboxylation allows a single lysine to coordinate two nickel ions.

It localises to the cytoplasm. The catalysed reaction is urea + 2 H2O + H(+) = hydrogencarbonate + 2 NH4(+). The protein operates within nitrogen metabolism; urea degradation; CO(2) and NH(3) from urea (urease route): step 1/1. This Burkholderia thailandensis (strain ATCC 700388 / DSM 13276 / CCUG 48851 / CIP 106301 / E264) protein is Urease subunit alpha.